We begin with the raw amino-acid sequence, 241 residues long: Endonuclease NucS (241 aa).

Belongs to the NucS endonuclease family.

Its subcellular location is the cytoplasm. Functionally, cleaves both 3' and 5' ssDNA extremities of branched DNA structures. The sequence is that of Endonuclease NucS from Corynebacterium jeikeium (strain K411).